Reading from the N-terminus, the 366-residue chain is Carbamoyl phosphate synthase small chain (366 aa).

The segment at 1–171 (MKKRKLILED…KPYVVPGRGL (171 aa)) is CPSase. L-glutamine is bound by residues Ser-46, Gly-220, and Gly-222. Residues 172–359 (RVVMVDFGAK…LNLIKASKVK (188 aa)) enclose the Glutamine amidotransferase type-1 domain. The active-site Nucleophile is the Cys-247. 4 residues coordinate L-glutamine: Leu-248, Gln-251, Asn-289, and Tyr-292. Catalysis depends on residues His-332 and Glu-334.

Belongs to the CarA family. Composed of two chains; the small (or glutamine) chain promotes the hydrolysis of glutamine to ammonia, which is used by the large (or ammonia) chain to synthesize carbamoyl phosphate. Tetramer of heterodimers (alpha,beta)4.

It catalyses the reaction hydrogencarbonate + L-glutamine + 2 ATP + H2O = carbamoyl phosphate + L-glutamate + 2 ADP + phosphate + 2 H(+). It carries out the reaction L-glutamine + H2O = L-glutamate + NH4(+). Its pathway is amino-acid biosynthesis; L-arginine biosynthesis; carbamoyl phosphate from bicarbonate: step 1/1. The protein operates within pyrimidine metabolism; UMP biosynthesis via de novo pathway; (S)-dihydroorotate from bicarbonate: step 1/3. In terms of biological role, small subunit of the glutamine-dependent carbamoyl phosphate synthetase (CPSase). CPSase catalyzes the formation of carbamoyl phosphate from the ammonia moiety of glutamine, carbonate, and phosphate donated by ATP, constituting the first step of 2 biosynthetic pathways, one leading to arginine and/or urea and the other to pyrimidine nucleotides. The small subunit (glutamine amidotransferase) binds and cleaves glutamine to supply the large subunit with the substrate ammonia. This chain is Carbamoyl phosphate synthase small chain, found in Oceanobacillus iheyensis (strain DSM 14371 / CIP 107618 / JCM 11309 / KCTC 3954 / HTE831).